The sequence spans 143 residues: Granulocyte-macrophage colony-stimulating factor (143 aa).

The first 17 residues, 1–17, serve as a signal peptide directing secretion; that stretch reads MWLQNLLLLGTVVCSFS. O-linked (GalNAc...) threonine glycosylation is present at Thr27. N-linked (GlcNAc...) asparagine glycans are attached at residues Asn44 and Asn54. Disulfide bonds link Cys70–Cys112 and Cys104–Cys137.

It belongs to the GM-CSF family. In terms of assembly, monomer. The signaling GM-CSF receptor complex is a dodecamer of two head-to-head hexamers of two alpha, two beta, and two ligand subunits.

The protein resides in the secreted. Functionally, cytokine that stimulates the growth and differentiation of hematopoietic precursor cells from various lineages, including granulocytes, macrophages, eosinophils and erythrocytes. This chain is Granulocyte-macrophage colony-stimulating factor (CSF2), found in Bos taurus (Bovine).